We begin with the raw amino-acid sequence, 512 residues long: Acid-sensing ion channel 2 (512 aa).

Over 1 to 42 (MDLKESPSEGSLQPSSIQIFANTSTLHGIRHIFVYGPLTIRR) the chain is Cytoplasmic. Ser8 and Ser11 each carry phosphoserine. Residues 43–64 (VLWAVAFVGSLGLLLVESSERV) form a helical membrane-spanning segment. The Extracellular segment spans residues 65–424 (SYYFSYQHVT…ETIEQKKAYE (360 aa)). 6 disulfides stabilise this stretch: Cys92-Cys193, Cys289-Cys364, Cys307-Cys360, Cys311-Cys358, Cys320-Cys342, and Cys322-Cys334. 2 N-linked (GlcNAc...) asparagine glycosylation sites follow: Asn365 and Asn392. Residues 425–439 (VAALLGDIGGQMGLF) form a helical membrane-spanning segment. At 440–512 (IGASILTILE…TLGTLEEIAC (73 aa)) the chain is on the cytoplasmic side. The GAS motif; ion selectivity filter signature appears at 441 to 443 (GAS).

The protein belongs to the amiloride-sensitive sodium channel (TC 1.A.6) family. ASIC2 subfamily. Can form homotrimers. Heterotrimer; forms functional heterotrimers producing channel with different properties. Forms heterotrimers with ASIC1; while ASIC1 determines current amplitude, ASIC2 influences the properties of the current. Forms heterotrimers with ASIC3; resulting in channels with distinct properties. Interacts with STOM; STOM regulates the gating of ASIC2-containing channels. Interacts with PICK1; promotes ASIC3 phosphorylation by PKC and activation of ASIC2/ASIC3 heterotrimers. As to expression, expressed in brain, cerebellum, trigeminal sensory ganglia and also detected in testis.

The protein resides in the cell membrane. The catalysed reaction is Na(+)(in) = Na(+)(out). It catalyses the reaction K(+)(in) = K(+)(out). It carries out the reaction Li(+)(in) = Li(+)(out). Inhibited by the diuretic drug amiloride. Inhibited by gadolinium ions, the heterotrimer with ASIC3 being more sensitive. Heterotrimer composed of ASIC1 and ASIC2 are inhibited by the snake venom mambalgin-1. In terms of biological role, forms pH-gated trimeric sodium channels that act as postsynaptic excitatory sensors in the nervous system. Upon extracellular acidification, these channels generate rapid, transient inward currents that fully desensitize. Highly selective for sodium, they are permeable to other cations. By forming heterotrimeric channels with ASIC1, could contribute to synaptic plasticity, learning, and memory. Additionally, as acid sensors at nerve terminals, plays a role in mechanosensation and phototransduction. The chain is Acid-sensing ion channel 2 from Homo sapiens (Human).